The sequence spans 380 residues: Cytochrome b (380 aa).

Helical transmembrane passes span 34-54 (FGWL…FLAM), 78-99 (WLLR…YFHI), 114-134 (WNIG…GYVL), and 179-199 (FFTF…IHLL). Residues His-84 and His-98 each coordinate heme b. 2 residues coordinate heme b: His-183 and His-197. His-202 is a binding site for a ubiquinone. The next 4 helical transmembrane spans lie at 227 to 247 (FKDL…STFA), 289 to 309 (LGGV…PIIH), 321 to 341 (AAKA…WIGG), and 348 to 368 (FISI…LIIP).

It belongs to the cytochrome b family. In terms of assembly, the cytochrome bc1 complex contains 3 respiratory subunits (MT-CYB, CYC1 and UQCRFS1), 2 core proteins (UQCRC1 and UQCRC2) and probably 6 low-molecular weight proteins. The cofactor is heme b.

The protein resides in the mitochondrion inner membrane. In terms of biological role, component of the ubiquinol-cytochrome c reductase complex (complex III or cytochrome b-c1 complex) that is part of the mitochondrial respiratory chain. The b-c1 complex mediates electron transfer from ubiquinol to cytochrome c. Contributes to the generation of a proton gradient across the mitochondrial membrane that is then used for ATP synthesis. The sequence is that of Cytochrome b (mt-cyb) from Rana dybowskii (Dybovsky's frog).